A 207-amino-acid polypeptide reads, in one-letter code: Interleukin-6 (207 aa).

An N-terminal signal peptide occupies residues 1-20; it reads MNSLSTSAFSLGLLLVMATA. C67 and C73 are oxidised to a cystine. S76 carries the post-translational modification Phosphoserine. An intrachain disulfide couples C96 to C106.

Belongs to the IL-6 superfamily. Component of a hexamer of two molecules each of IL6, IL6R and IL6ST; first binds to IL6R to associate with the signaling subunit IL6ST. Interacts with IL6R (via the N-terminal ectodomain); this interaction may be affected by IL6R-binding with SORL1, hence decreasing IL6 cis signaling. Interacts with SORL1 (via the N-terminal ectodomain); this interaction leads to IL6 internalization and lysosomal degradation. May form a trimeric complex with the soluble SORL1 ectodomain and soluble IL6R receptor; this interaction might stabilize circulating IL6, hence promoting IL6 trans signaling.

Its subcellular location is the secreted. In terms of biological role, cytokine with a wide variety of biological functions in immunity, tissue regeneration, and metabolism. Binds to IL6R, then the complex associates to the signaling subunit IL6ST/gp130 to trigger the intracellular IL6-signaling pathway. The interaction with the membrane-bound IL6R and IL6ST stimulates 'classic signaling', whereas the binding of IL6 and soluble IL6R to IL6ST stimulates 'trans-signaling'. Alternatively, 'cluster signaling' occurs when membrane-bound IL6:IL6R complexes on transmitter cells activate IL6ST receptors on neighboring receiver cells. Its function is as follows. IL6 is a potent inducer of the acute phase response. Rapid production of IL6 contributes to host defense during infection and tissue injury, but excessive IL6 synthesis is involved in disease pathology. In the innate immune response, is synthesized by myeloid cells, such as macrophages and dendritic cells, upon recognition of pathogens through toll-like receptors (TLRs) at the site of infection or tissue injury. In the adaptive immune response, is required for the differentiation of B cells into immunoglobulin-secreting cells. Plays a major role in the differentiation of CD4(+) T cell subsets. Essential factor for the development of T follicular helper (Tfh) cells that are required for the induction of germinal-center formation. Required to drive naive CD4(+) T cells to the Th17 lineage. Also required for proliferation of myeloma cells and the survival of plasmablast cells. Functionally, acts as an essential factor in bone homeostasis and on vessels directly or indirectly by induction of VEGF, resulting in increased angiogenesis activity and vascular permeability. Induces, through 'trans-signaling' and synergistically with IL1B and TNF, the production of VEGF. Involved in metabolic controls, is discharged into the bloodstream after muscle contraction increasing lipolysis and improving insulin resistance. 'Trans-signaling' in central nervous system also regulates energy and glucose homeostasis. Mediates, through GLP-1, crosstalk between insulin-sensitive tissues, intestinal L cells and pancreatic islets to adapt to changes in insulin demand. Also acts as a myokine. Plays a protective role during liver injury, being required for maintenance of tissue regeneration. Also has a pivotal role in iron metabolism by regulating HAMP/hepcidin expression upon inflammation or bacterial infection. Through activation of IL6ST-YAP-NOTCH pathway, induces inflammation-induced epithelial regeneration. The sequence is that of Interleukin-6 (IL6) from Vulpes vulpes (Red fox).